Here is a 682-residue protein sequence, read N- to C-terminus: UvrABC system protein B (682 aa).

Residues Asp27 to Ile414 enclose the Helicase ATP-binding domain. Residue Gly40–Thr47 coordinates ATP. The Beta-hairpin motif lies at Tyr93–Ile116. The region spanning Gln432–Leu594 is the Helicase C-terminal domain. A disordered region spans residues Ala609–Ala628. Residues Gly642 to Arg677 form the UVR domain.

The protein belongs to the UvrB family. In terms of assembly, forms a heterotetramer with UvrA during the search for lesions. Interacts with UvrC in an incision complex.

It is found in the cytoplasm. The UvrABC repair system catalyzes the recognition and processing of DNA lesions. A damage recognition complex composed of 2 UvrA and 2 UvrB subunits scans DNA for abnormalities. Upon binding of the UvrA(2)B(2) complex to a putative damaged site, the DNA wraps around one UvrB monomer. DNA wrap is dependent on ATP binding by UvrB and probably causes local melting of the DNA helix, facilitating insertion of UvrB beta-hairpin between the DNA strands. Then UvrB probes one DNA strand for the presence of a lesion. If a lesion is found the UvrA subunits dissociate and the UvrB-DNA preincision complex is formed. This complex is subsequently bound by UvrC and the second UvrB is released. If no lesion is found, the DNA wraps around the other UvrB subunit that will check the other stand for damage. This chain is UvrABC system protein B, found in Oleidesulfovibrio alaskensis (strain ATCC BAA-1058 / DSM 17464 / G20) (Desulfovibrio alaskensis).